A 454-amino-acid chain; its full sequence is tRNA modification GTPase MnmE (454 aa).

Residues Arg-23, Glu-80, and Lys-120 each contribute to the (6S)-5-formyl-5,6,7,8-tetrahydrofolate site. Residues 216–377 (GMKVVIAGRP…LRDHLKQSMG (162 aa)) form the TrmE-type G domain. Asn-226 serves as a coordination point for K(+). GTP-binding positions include 226-231 (NAGKSS), 245-251 (TDIAGTT), 270-273 (DTAG), 335-338 (NKAD), and 358-360 (SAR). Ser-230 serves as a coordination point for Mg(2+). The K(+) site is built by Thr-245, Ile-247, and Thr-250. Thr-251 provides a ligand contact to Mg(2+). Lys-454 serves as a coordination point for (6S)-5-formyl-5,6,7,8-tetrahydrofolate.

It belongs to the TRAFAC class TrmE-Era-EngA-EngB-Septin-like GTPase superfamily. TrmE GTPase family. Homodimer. Heterotetramer of two MnmE and two MnmG subunits. It depends on K(+) as a cofactor.

It localises to the cytoplasm. Functionally, exhibits a very high intrinsic GTPase hydrolysis rate. Involved in the addition of a carboxymethylaminomethyl (cmnm) group at the wobble position (U34) of certain tRNAs, forming tRNA-cmnm(5)s(2)U34. The chain is tRNA modification GTPase MnmE from Serratia proteamaculans (strain 568).